A 636-amino-acid chain; its full sequence is Ketocytochalasin monooxygenase (636 aa).

Residues D125, 133–136 (TWYW), D145, Y151, and I195 each bind FAD. 143 to 145 (ACD) contacts NADP(+). Residues 279–285 (TGASAVQ), 302–303 (RT), and 420–421 (KR) each bind NADP(+). W534 provides a ligand contact to FAD.

This sequence belongs to the FAD-binding monooxygenase family. FAD serves as cofactor.

The enzyme catalyses ketocytochalasin + NADPH + O2 + H(+) = iso-precytochalasin + NADP(+) + H2O. It catalyses the reaction iso-precytochalasin + NADPH + O2 + H(+) = cytochalasin Z16 + NADP(+) + H2O. The protein operates within mycotoxin biosynthesis. Functionally, ketocytochalasin monooxygenase; part of the gene cluster that mediates the biosynthesis of a family of the mycotoxins cytochalasins E and K. The hybrid PKS-NRPS synthetase ccsA and the enoyl reductase ccsC are responsible for fusion of phenylalanine with an octaketide backbone and subsequent release of the stable tetramic acid precursor. The polyketide synthase module (PKS) of the PKS-NRPS ccsA is responsible for the synthesis of the octaketide backbone. The downstream nonribosomal peptide synthetase (NRPS) amidates the carboxyl end of the octaketide with a phenylalanine. A reductase-like domain (R) at the C-terminus catalyzes the reductive release of the polyketide-amino acid intermediate. Because ccsA lacks a designated enoylreductase (ER) domain, the required activity is provided the enoyl reductase ccsC. Upon formation of the 11-membered carbocycle-fused perhydroisoindolone intermediate, a number of oxidative steps are required to afford the final cytochalasin E and K, including two hydroxylations at C17 and C18, one alcohol oxidation at C17, one epoxidation at C6 and C7 and two Baeyer-Villiger oxidations. The oxidative modification at C17, C18 and the C6-C7 epoxidation are likely to be catalyzed by the two cytochrome P450 oxygenases ccsD and ccsG. CcsD may be responsible for the epoxidation of the C6-C7 double bond. CcsG may be responsible for the successive oxidative modifications at C17 and C18. The double Baeyer-Villiger oxidations of ketocytochalasin to precytochalasin and cytochalasin Z(16) are among the final steps leading to cytochalasin E and K and are catalyzed by ccsB. The first oxygen insertion step follows that of the classic BVMO mechanism, generating the ester precytochalasin. Release of precytochalasin into an aqueous environment can generate the shunt product iso-precytochalasin through spontaneous isomerization. Alternatively, precytochalasin can undergo further oxidation by ccsB to yield the in-line carbonate-containing cytochalasin Z(16). Cytochalasin Z(16) is a precursor to cytochalasin E and cytochalasin K, whereas iso-precytochalasin is a precursor to cytochalasin Z(17) and rosellichalasin. The hydrolyase ccsE may catalyze hydrolysis of epoxide bond in cytochalasin E to afford cytochalasin K. The function of ccsF has not been assigned but it may play a role in post-PKS-NRPS biosynthetic step, resistance or transport of cytochalasins and related PKS-NRPS products. This Aspergillus clavatus (strain ATCC 1007 / CBS 513.65 / DSM 816 / NCTC 3887 / NRRL 1 / QM 1276 / 107) protein is Ketocytochalasin monooxygenase.